Consider the following 270-residue polypeptide: Peflin (270 aa).

The segment at 1-97 is disordered; the sequence is MSYQYGQGYS…YRQQGSAGNV (97 aa). 5 consecutive repeat copies span residues 22–30, 44–54, 62–70, 72–81, and 83–91. The 5 X 9 AA approximate tandem repeat of [AP]-P-G-G-P-Y-G-G-P-P stretch occupies residues 22–91; that stretch reads PPRAPYAGGP…QPQGGPYRQQ (70 aa). Composition is skewed to low complexity over residues 26 to 47 and 55 to 66; these read PYAG…PPGQ and YGSYGQPGPRAP. Residues 67-84 are compositionally biased toward gly residues; the sequence is YGGGQAPGGPYGGYGQPQ. 5 consecutive EF-hand domains span residues 100–135, 141–169, 170–202, 203–239, and 240–269; these read GVNP…FNNS, TCIM…WTFL, QQWR…MGYN, LSPQ…LQSM, and TQAF…ITRL. 5 residues coordinate Ca(2+): Asp113, Asp115, Ser117, Tyr119, and Glu124. 5 residues coordinate Ca(2+): Asp180, Asp182, Ser184, Ser186, and Glu191.

As to quaternary structure, heterodimer; heterodimerizes (via the EF-hand 5) with pdcd6.

It is found in the cytoplasm. The protein localises to the endoplasmic reticulum. It localises to the membrane. Its subcellular location is the cytoplasmic vesicle. The protein resides in the COPII-coated vesicle membrane. Functionally, calcium-binding protein that acts as an adapter that bridges unrelated proteins or stabilizes weak protein-protein complexes in response to calcium. Acts as a negative regulator of ER-Golgi transport. The polypeptide is Peflin (Danio rerio (Zebrafish)).